The sequence spans 120 residues: NAD(P)H-quinone oxidoreductase subunit 3 (120 aa).

Transmembrane regions (helical) follow at residues 6 to 26, 64 to 84, and 89 to 109; these read GYDA…LALV, MFAL…PWAV, and LGLL…VALA.

The protein belongs to the complex I subunit 3 family. In terms of assembly, NDH-1 can be composed of about 15 different subunits; different subcomplexes with different compositions have been identified which probably have different functions.

Its subcellular location is the cellular thylakoid membrane. It catalyses the reaction a plastoquinone + NADH + (n+1) H(+)(in) = a plastoquinol + NAD(+) + n H(+)(out). It carries out the reaction a plastoquinone + NADPH + (n+1) H(+)(in) = a plastoquinol + NADP(+) + n H(+)(out). In terms of biological role, NDH-1 shuttles electrons from an unknown electron donor, via FMN and iron-sulfur (Fe-S) centers, to quinones in the respiratory and/or the photosynthetic chain. The immediate electron acceptor for the enzyme in this species is believed to be plastoquinone. Couples the redox reaction to proton translocation, and thus conserves the redox energy in a proton gradient. Cyanobacterial NDH-1 also plays a role in inorganic carbon-concentration. In Synechococcus sp. (strain WH7803), this protein is NAD(P)H-quinone oxidoreductase subunit 3.